The chain runs to 108 residues: UPF0145 protein ACIAD2946 (108 aa).

This sequence belongs to the UPF0145 family.

The protein is UPF0145 protein ACIAD2946 of Acinetobacter baylyi (strain ATCC 33305 / BD413 / ADP1).